Consider the following 454-residue polypeptide: CCA-adding enzyme (454 aa).

2 residues coordinate ATP: Ser59 and Arg62. CTP is bound by residues Ser59 and Arg62. Positions 71, 73, and 125 each coordinate Mg(2+). ATP-binding residues include His148, Lys167, and Tyr176. 3 residues coordinate CTP: His148, Lys167, and Tyr176.

It belongs to the tRNA nucleotidyltransferase/poly(A) polymerase family. Archaeal CCA-adding enzyme subfamily. Homodimer. The cofactor is Mg(2+).

The catalysed reaction is a tRNA precursor + 2 CTP + ATP = a tRNA with a 3' CCA end + 3 diphosphate. It carries out the reaction a tRNA with a 3' CCA end + 2 CTP + ATP = a tRNA with a 3' CCACCA end + 3 diphosphate. Functionally, catalyzes the addition and repair of the essential 3'-terminal CCA sequence in tRNAs without using a nucleic acid template. Adds these three nucleotides in the order of C, C, and A to the tRNA nucleotide-73, using CTP and ATP as substrates and producing inorganic pyrophosphate. tRNA 3'-terminal CCA addition is required both for tRNA processing and repair. Also involved in tRNA surveillance by mediating tandem CCA addition to generate a CCACCA at the 3' terminus of unstable tRNAs. While stable tRNAs receive only 3'-terminal CCA, unstable tRNAs are marked with CCACCA and rapidly degraded. The chain is CCA-adding enzyme from Methanosarcina acetivorans (strain ATCC 35395 / DSM 2834 / JCM 12185 / C2A).